The chain runs to 109 residues: Heterogeneous nuclear ribonucleoprotein-like protein HD40 (109 aa).

The segment at 1–36 (EEVSNGQEHTEGMXQGEXNXIXVEEHHEGEKNSHLV) is disordered. The segment covering 23-36 (VEEHHEGEKNSHLV) has biased composition (basic and acidic residues). The RRM domain occupies 40–50 (EEKKLFVGALS). An asymmetric dimethylarginine mark is found at R102 and R105.

Its subcellular location is the cytoplasm. It localises to the nucleus. The protein is Heterogeneous nuclear ribonucleoprotein-like protein HD40 of Artemia salina (Brine shrimp).